We begin with the raw amino-acid sequence, 490 residues long: Betaine aldehyde dehydrogenase (490 aa).

Residues I27 and D93 each contribute to the K(+) site. 150-152 (GAW) provides a ligand contact to NAD(+). K162 (charge relay system) is an active-site residue. 176–179 (KPSE) provides a ligand contact to NAD(+). V180 contacts K(+). 230–233 (GTDT) contacts NAD(+). Residue L246 participates in K(+) binding. E252 functions as the Proton acceptor in the catalytic mechanism. Positions 254, 286, and 387 each coordinate NAD(+). C286 acts as the Nucleophile in catalysis. Residue C286 is modified to Cysteine sulfenic acid (-SOH). K(+) is bound by residues K457 and G460. Residue E464 is the Charge relay system of the active site.

Belongs to the aldehyde dehydrogenase family. As to quaternary structure, dimer of dimers. The cofactor is K(+).

The catalysed reaction is betaine aldehyde + NAD(+) + H2O = glycine betaine + NADH + 2 H(+). The protein operates within amine and polyamine biosynthesis; betaine biosynthesis via choline pathway; betaine from betaine aldehyde: step 1/1. Involved in the biosynthesis of the osmoprotectant glycine betaine. Catalyzes the irreversible oxidation of betaine aldehyde to the corresponding acid. This is Betaine aldehyde dehydrogenase from Pseudomonas savastanoi pv. phaseolicola (strain 1448A / Race 6) (Pseudomonas syringae pv. phaseolicola (strain 1448A / Race 6)).